Reading from the N-terminus, the 404-residue chain is Coenzyme F420H(2) oxidase (404 aa).

Residues His-83, Glu-85, Asp-87, His-88, His-151, Asp-170, and His-233 each contribute to the Fe cation site. The 141-residue stretch at 259–399 (VTVIYDTMHG…ACFEAGRKLA (141 aa)) folds into the Flavodoxin-like domain. FMN contacts are provided by residues 265-270 (TMHGST), 317-320 (TIYD), and 351-356 (SMGGNG).

This sequence in the N-terminal section; belongs to the zinc metallo-hydrolase group 3 family. In terms of assembly, homodimer. Homotetramer. The tetramer is composed of two functional dimers. It depends on FMN as a cofactor. Fe cation serves as cofactor.

It catalyses the reaction 2 reduced coenzyme F420-(gamma-L-Glu)(n) + O2 = 2 oxidized coenzyme F420-(gamma-L-Glu)(n) + 2 H2O + 2 H(+). Its function is as follows. Catalyzes the oxidation of F420H(2) with O(2). May be involved in O(2) detoxification, reducing the intracellular O(2) concentration to a level allowing growth at the expense of methane formation. The polypeptide is Coenzyme F420H(2) oxidase (Methanothermobacter marburgensis (strain ATCC BAA-927 / DSM 2133 / JCM 14651 / NBRC 100331 / OCM 82 / Marburg) (Methanobacterium thermoautotrophicum)).